Here is a 417-residue protein sequence, read N- to C-terminus: Glutamyl-tRNA reductase (417 aa).

Substrate contacts are provided by residues 49–52 (TCNR), Ser-105, 110–112 (EPQ), and Gln-116. Cys-50 acts as the Nucleophile in catalysis. 185–190 (GAGEMI) lines the NADP(+) pocket.

This sequence belongs to the glutamyl-tRNA reductase family. Homodimer.

The catalysed reaction is (S)-4-amino-5-oxopentanoate + tRNA(Glu) + NADP(+) = L-glutamyl-tRNA(Glu) + NADPH + H(+). It participates in porphyrin-containing compound metabolism; protoporphyrin-IX biosynthesis; 5-aminolevulinate from L-glutamyl-tRNA(Glu): step 1/2. Its function is as follows. Catalyzes the NADPH-dependent reduction of glutamyl-tRNA(Glu) to glutamate 1-semialdehyde (GSA). This is Glutamyl-tRNA reductase from Azoarcus sp. (strain BH72).